A 248-amino-acid polypeptide reads, in one-letter code: Probable transcriptional regulatory protein Ccel_0181 (248 aa).

Belongs to the TACO1 family.

It is found in the cytoplasm. The protein is Probable transcriptional regulatory protein Ccel_0181 of Ruminiclostridium cellulolyticum (strain ATCC 35319 / DSM 5812 / JCM 6584 / H10) (Clostridium cellulolyticum).